The chain runs to 445 residues: Aminopeptidase C (445 aa).

Active-site residues include cysteine 69, histidine 363, and asparagine 385.

The protein belongs to the peptidase C1 family. In terms of assembly, homohexamer.

The enzyme catalyses Inactivates bleomycin B2 (a cytotoxic glycometallopeptide) by hydrolysis of a carboxyamide bond of beta-aminoalanine, but also shows general aminopeptidase activity. The specificity varies somewhat with source, but amino acid arylamides of Met, Leu and Ala are preferred.. This Streptococcus thermophilus protein is Aminopeptidase C (pepC).